A 377-amino-acid polypeptide reads, in one-letter code: Prostaglandin reductase-3 (377 aa).

Lys35 bears the N6-acetyllysine mark. NADP(+) is bound by residues Thr185, Ser205, Lys209, Tyr224, Ser247, Ile269, and Tyr275. Ser299 carries the post-translational modification Phosphoserine. Residues 303–305 (FFL) and Asn361 each bind NADP(+).

It belongs to the zinc-containing alcohol dehydrogenase family. Quinone oxidoreductase subfamily.

The protein localises to the peroxisome. It catalyses the reaction 13,14-dihydro-15-oxo-prostaglandin E2 + NADP(+) = 15-oxoprostaglandin E2 + NADPH + H(+). The enzyme catalyses 13,14-dihydro-15-oxo-prostaglandin E1 + NADP(+) = 15-oxoprostaglandin E1 + NADPH + H(+). It carries out the reaction 13,14-dihydro-15-oxo-PGF2alpha + NADP(+) = 15-oxoprostaglandin F2alpha + NADPH + H(+). The catalysed reaction is 13,14-dihydro-15-oxo-prostaglandin F1alpha + NADP(+) = 15-oxoprostaglandin F1alpha + NADPH + H(+). Its function is as follows. Functions as 15-oxo-prostaglandin 13-reductase and acts on 15-keto-PGE1, 15-keto-PGE2, 15-keto-PGE1-alpha and 15-keto-PGE2-alpha with highest efficiency towards 15-keto-PGE2-alpha. Overexpression represses transcriptional activity of PPARG and inhibits adipocyte differentiation. The protein is Prostaglandin reductase-3 (PTGR3) of Bos taurus (Bovine).